The primary structure comprises 238 residues: Sugar fermentation stimulation protein homolog (238 aa).

It belongs to the SfsA family.

This is Sugar fermentation stimulation protein homolog from Brucella melitensis biotype 1 (strain ATCC 23456 / CCUG 17765 / NCTC 10094 / 16M).